The primary structure comprises 364 residues: 3-isopropylmalate dehydrogenase (364 aa).

Glycine 78 to glutamate 91 provides a ligand contact to NAD(+). Substrate contacts are provided by arginine 99, arginine 109, arginine 138, and aspartate 228. Aspartate 228, aspartate 252, and aspartate 256 together coordinate Mg(2+). Position 286–298 (glycine 286–asparagine 298) interacts with NAD(+).

This sequence belongs to the isocitrate and isopropylmalate dehydrogenases family. LeuB type 1 subfamily. Homodimer. It depends on Mg(2+) as a cofactor. Mn(2+) serves as cofactor.

The protein localises to the cytoplasm. It catalyses the reaction (2R,3S)-3-isopropylmalate + NAD(+) = 4-methyl-2-oxopentanoate + CO2 + NADH. Its pathway is amino-acid biosynthesis; L-leucine biosynthesis; L-leucine from 3-methyl-2-oxobutanoate: step 3/4. Its function is as follows. Catalyzes the oxidation of 3-carboxy-2-hydroxy-4-methylpentanoate (3-isopropylmalate) to 3-carboxy-4-methyl-2-oxopentanoate. The product decarboxylates to 4-methyl-2 oxopentanoate. This chain is 3-isopropylmalate dehydrogenase, found in Buchnera aphidicola subsp. Uroleucon obscurum.